The chain runs to 1073 residues: Pleckstrin homology domain-containing family G member 5 (1073 aa).

Disordered stretches follow at residues 1–28 (MGTG…SQLL), 91–135 (VSTR…ARRR), 217–261 (PGDE…ESSL), 278–309 (GEAG…GINE), and 367–388 (SWEE…RLED). Basic and acidic residues-rich tracts occupy residues 217–231 (PGDE…KDSK) and 249–260 (ERVDPQSRRESS). The span at 367–381 (SWEEEEEDDEEDEES) shows a compositional bias: acidic residues. Positions 406-598 (HQQEAVWELL…ERFIHHVNTC (193 aa)) constitute a DH domain. A PH domain is found at 654–754 (QLLLEGSLRM…WVDTIYNAQN (101 aa)). Disordered regions lie at residues 762-818 (QLSA…TSDG), 833-873 (TLSS…GPVD), and 899-925 (PVVE…TPVQ). Residues 777 to 790 (LEEEEDEQEEEGEE) are compositionally biased toward acidic residues. Composition is skewed to polar residues over residues 791-809 (SGTS…SNSL) and 844-864 (VSSQ…TPTS). The residue at position 793 (Thr-793) is a Phosphothreonine. Ser-798 is modified (phosphoserine). Positions 900-915 (VVEPAPVPQTPSPQPS) are enriched in pro residues. Position 909 is a phosphothreonine (Thr-909). Phosphoserine is present on residues Ser-911, Ser-936, and Ser-941. The segment at 993–1046 (MCDPCHGPQLSESENRPSHMTGGPADSARRRCREMPSGTMSRVQSEPPSGVSAQ) is disordered. A compositionally biased stretch (polar residues) spans 1030–1039 (GTMSRVQSEP).

In terms of assembly, interacts with GIPC1/synectin and RHOA. As to expression, expressed in neurons and glial cells of the peripheral nervous system, with highest levels of expression in the brain and sciatic nerve endoneurium. Isoform 2 is expressed at detectable levels only in malignant cells.

It is found in the cytoplasm. The protein resides in the perinuclear region. The protein localises to the cell membrane. It localises to the cell junction. Its subcellular location is the cell projection. It is found in the lamellipodium. Functions as a guanine exchange factor (GEF) for RAB26 and thus regulates autophagy of synaptic vesicles in axon terminal of motoneurons. Involved in the control of neuronal cell differentiation. Plays a role in angiogenesis through regulation of endothelial cells chemotaxis. Also affects the migration, adhesion, and matrix/bone degradation in macrophages and osteoclasts. This is Pleckstrin homology domain-containing family G member 5 (Plekhg5) from Mus musculus (Mouse).